The sequence spans 160 residues: Cytochrome b6-f complex subunit 4 (160 aa).

Helical transmembrane passes span 36–56, 95–115, and 131–151; these read LLYMFPVVILGTFALSISLAV, LLGVLCMAAVPVGLITVPFIE, and TLFLFGTATAVWLGIGAALPI.

This sequence belongs to the cytochrome b family. PetD subfamily. The 4 large subunits of the cytochrome b6-f complex are cytochrome b6, subunit IV (17 kDa polypeptide, petD), cytochrome f and the Rieske protein, while the 4 small subunits are petG, petL, petM and petN. The complex functions as a dimer.

Its subcellular location is the plastid. It is found in the chloroplast thylakoid membrane. Functionally, component of the cytochrome b6-f complex, which mediates electron transfer between photosystem II (PSII) and photosystem I (PSI), cyclic electron flow around PSI, and state transitions. This is Cytochrome b6-f complex subunit 4 from Oltmannsiellopsis viridis (Marine flagellate).